The following is a 228-amino-acid chain: Core-capsid bridging protein (228 aa).

Residues 146–177 (ARPPAARISPPRRRRRRRRSPRPRATAAYRSS) are disordered. Over residues 155-167 (PPRRRRRRRRSPR) the composition is skewed to basic residues. The segment covering 168–177 (PRATAAYRSS) has biased composition (low complexity).

Belongs to the adenoviridae core-capsid bridging protein family. As to quaternary structure, monomer. Homodimer. Exists in equilibrium between monomers and dimers in solution. Interacts with the histone-like nucleoprotein; this interactions bridge the virus core to the capsid. Interacts with core protein X; this interactions bridge the virus core to the capsid. Interacts with the endosome lysis protein VI; this interactions bridge the virus core to the capsid. Interacts with the peripentonal hexons. Interacts with host NPM1; this interaction might play a role in virus assembly.

The protein resides in the virion. Its subcellular location is the host nucleus. It localises to the host nucleolus. Associates loosely with the viral DNA to form an outer shell around the nucleoprotein-DNA complex and links it with the capsid by binding the endosome lysis protein. Dissociates from the viral genome during entry. Might be involved in nuclear capsid assembly of the viral particles through its association with NPM1/nucleophosmin. This chain is Core-capsid bridging protein, found in Murine adenovirus A serotype 1 (MAdV-1).